The following is a 317-amino-acid chain: Ribosomal RNA small subunit methyltransferase H (317 aa).

Residues alanine 37 to histidine 39, aspartate 56, phenylalanine 85, aspartate 106, and glutamine 113 each bind S-adenosyl-L-methionine.

It belongs to the methyltransferase superfamily. RsmH family.

The protein resides in the cytoplasm. It catalyses the reaction cytidine(1402) in 16S rRNA + S-adenosyl-L-methionine = N(4)-methylcytidine(1402) in 16S rRNA + S-adenosyl-L-homocysteine + H(+). In terms of biological role, specifically methylates the N4 position of cytidine in position 1402 (C1402) of 16S rRNA. In Lactococcus lactis subsp. lactis (strain IL1403) (Streptococcus lactis), this protein is Ribosomal RNA small subunit methyltransferase H.